A 1066-amino-acid polypeptide reads, in one-letter code: Elongation factor 3 (1066 aa).

HEAT repeat units follow at residues 112-149 (FIFE…VMSP), 151-188 (AAQQ…ACPE), 192-229 (ALMP…LISN), 231-268 (DIER…EVDS), 269-306 (ATLA…LVDN), and 312-353 (PFLG…VTGD). ADP is bound at residue threonine 418. 2 consecutive ABC transporter domains span residues 454–672 (EEGE…YAEL) and 699–1015 (IKMK…KKEE). ADP-binding residues include asparagine 735, glutamate 944, asparagine 947, and histidine 973. The tract at residues 997–1066 (GHDWTESNSK…YDSADELEDL (70 aa)) is disordered. Basic residues predominate over residues 1042–1054 (RKAKKDRMARKKA).

Belongs to the ABC transporter superfamily. ABCF family. EF3 subfamily.

Its subcellular location is the cytoplasm. The protein localises to the cytosol. The catalysed reaction is ATP + H2O = ADP + phosphate + H(+). It participates in protein biosynthesis; polypeptide chain elongation. Ribosome-dependent ATPase that functions in cytoplasmic translation elongation. Required for the ATP-dependent release of deacylated tRNA from the ribosomal E-site during protein biosynthesis. Stimulates the eEF1A-dependent binding of aminoacyl-tRNA to the ribosomal A-site, which has reduced affinity for tRNA as long as the E-site is occupied. Assists translation termination by stimulating the release of nascent protein from the ribosome by release factors. In Mycosarcoma maydis (Corn smut fungus), this protein is Elongation factor 3.